A 109-amino-acid chain; its full sequence is UPF0060 membrane protein YfjF (109 aa).

A run of 4 helical transmembrane segments spans residues 6-26 (ILLF…VWLW), 32-52 (PAGY…LPTF), 61-81 (VYAA…WLVD), and 87-107 (LYDW…LFAP).

This sequence belongs to the UPF0060 family.

The protein localises to the cell membrane. The polypeptide is UPF0060 membrane protein YfjF (yfjF) (Bacillus subtilis (strain 168)).